Here is a 631-residue protein sequence, read N- to C-terminus: uncharacterized protein (631 aa).

Helical transmembrane passes span 42–62 (VLVG…IGGF), 76–96 (ALKL…GTLL), 106–128 (VLGL…GPAP), 152–172 (AGLT…GWLW), 344–364 (ALKY…FGFA), 366–386 (SYWI…VFTL), 398–418 (IGVI…YIAF), 429–449 (MLIV…ALVI), and 464–484 (IARL…TMLL).

The protein belongs to the YccS/YhfK family.

The protein localises to the cell membrane. This is an uncharacterized protein from Bacillus subtilis (strain 168).